Here is a 270-residue protein sequence, read N- to C-terminus: Putative pyruvate, phosphate dikinase regulatory protein (270 aa).

Position 149–156 (149–156) interacts with ADP; sequence GVSRTSKT.

Belongs to the pyruvate, phosphate/water dikinase regulatory protein family. PDRP subfamily.

The enzyme catalyses N(tele)-phospho-L-histidyl/L-threonyl-[pyruvate, phosphate dikinase] + ADP = N(tele)-phospho-L-histidyl/O-phospho-L-threonyl-[pyruvate, phosphate dikinase] + AMP + H(+). It carries out the reaction N(tele)-phospho-L-histidyl/O-phospho-L-threonyl-[pyruvate, phosphate dikinase] + phosphate + H(+) = N(tele)-phospho-L-histidyl/L-threonyl-[pyruvate, phosphate dikinase] + diphosphate. Bifunctional serine/threonine kinase and phosphorylase involved in the regulation of the pyruvate, phosphate dikinase (PPDK) by catalyzing its phosphorylation/dephosphorylation. This is Putative pyruvate, phosphate dikinase regulatory protein from Thermoanaerobacter pseudethanolicus (strain ATCC 33223 / 39E) (Clostridium thermohydrosulfuricum).